The primary structure comprises 132 residues: Small ribosomal subunit protein uS8 (132 aa).

This sequence belongs to the universal ribosomal protein uS8 family. In terms of assembly, part of the 30S ribosomal subunit. Contacts proteins S5 and S12.

Functionally, one of the primary rRNA binding proteins, it binds directly to 16S rRNA central domain where it helps coordinate assembly of the platform of the 30S subunit. The polypeptide is Small ribosomal subunit protein uS8 (Streptococcus pneumoniae (strain Taiwan19F-14)).